Here is a 311-residue protein sequence, read N- to C-terminus: Methionyl-tRNA formyltransferase (311 aa).

110–113 (SLLP) contributes to the (6S)-5,6,7,8-tetrahydrofolate binding site.

Belongs to the Fmt family.

The enzyme catalyses L-methionyl-tRNA(fMet) + (6R)-10-formyltetrahydrofolate = N-formyl-L-methionyl-tRNA(fMet) + (6S)-5,6,7,8-tetrahydrofolate + H(+). Functionally, attaches a formyl group to the free amino group of methionyl-tRNA(fMet). The formyl group appears to play a dual role in the initiator identity of N-formylmethionyl-tRNA by promoting its recognition by IF2 and preventing the misappropriation of this tRNA by the elongation apparatus. The sequence is that of Methionyl-tRNA formyltransferase from Streptococcus thermophilus (strain ATCC BAA-250 / LMG 18311).